The primary structure comprises 106 residues: MSVNRIQLSGKDILEKDFKTGIRGYSQEEVDEFLDVIIQDYDNFKQEIDRLKAENEKLKKSTPAVEQSRSRSQQPPTSQVNYDVLKRLSNLEKAVFGKRYTEQEES.

The stretch at 34-67 (LDVIIQDYDNFKQEIDRLKAENEKLKKSTPAVEQ) forms a coiled coil. The tract at residues 55-83 (NEKLKKSTPAVEQSRSRSQQPPTSQVNYD) is disordered. Residues 70–79 (SRSQQPPTSQ) are compositionally biased toward low complexity.

It belongs to the GpsB family. As to quaternary structure, forms polymers through the coiled coil domains. Interacts with PBP1, MreC and EzrA.

Its subcellular location is the cytoplasm. Its function is as follows. Divisome component that associates with the complex late in its assembly, after the Z-ring is formed, and is dependent on DivIC and PBP2B for its recruitment to the divisome. Together with EzrA, is a key component of the system that regulates PBP1 localization during cell cycle progression. Its main role could be the removal of PBP1 from the cell pole after pole maturation is completed. Also contributes to the recruitment of PBP1 to the division complex. Not essential for septum formation. The protein is Cell cycle protein GpsB of Oceanobacillus iheyensis (strain DSM 14371 / CIP 107618 / JCM 11309 / KCTC 3954 / HTE831).